Reading from the N-terminus, the 29-residue chain is NADH dehydrogenase [ubiquinone] 1 beta subcomplex subunit 10 (29 aa).

The disordered stretch occupies residues 1 to 29; sequence GRKKGVQFDEGAPDDFDPNNPYKKDVAFL.

Belongs to the complex I NDUFB10 subunit family. Complex I is composed of about 45 different subunits.

It localises to the mitochondrion inner membrane. Functionally, accessory subunit of the mitochondrial membrane respiratory chain NADH dehydrogenase (Complex I), that is believed not to be involved in catalysis. Complex I functions in the transfer of electrons from NADH to the respiratory chain. The immediate electron acceptor for the enzyme is believed to be ubiquinone. The chain is NADH dehydrogenase [ubiquinone] 1 beta subcomplex subunit 10 from Solanum tuberosum (Potato).